The chain runs to 880 residues: MDALTPRDSPKRDDSMATSAATAASAKPDALTIGKEGIVHGHIHNYNNLTYIHGHLHHSAPVNDSSASATPAAAAVADAATSAFASGASHDMGGDCHVNEKCKEYTDCQHFEFLNYHNNPSLTKYNDTATYNSNNHSFANNFHSVASDPTSPQQNSKSDLPRRKDSWFNDDLILLPSSKKNKPNPPPGSDDCYCTPKILEICCDETHPKSEANIKQGESDQPTKKDISENGNDVAIFTDVKNDHLMPNFNLHDQYCNSTNHDSHNHNNTVPDSFSQLMSHLSEIDCDLTCDTPCTASTSATSGHKFVQDHQSSNNDDVFHKYCKFCEESTDNQPCSKHMHLESKPPQLPPKCSSLRKPTNTLQGTNHAYHEHILNTDMDLKILEDLCNISSLYEVPFGKHINHHDHNNAGNGCDGSSTGNNENGNQTMNLLLSSINRCNPKNNLNGSNNNTAGATSTDHQHHHHRIQFHSHKPNRNNIVNNSGISAANTTADLTNNDLNDLISREYSYERFRNQSEPPSLPKVTHQNQKNRRSWPTKDLESTDFSSLEDSLPSSISPPIQTTSTINFNWCFKEEKNNDLKCKWKECPESCSSLFDLQRHLLKDHVSQDFKHPMEPLACNWEDCDFLGDDTCSIVNHINCQHGINFDIQFANPDSFLPGSISKEKHHLLHCPNPQTHEVSKADGAPDMTSANDVSNIPPIKQPEQVICQWDGCNKSFSSAQELNDHLEAVHLTRGKSEYQCLWHDCHRTFPQRQKLIRHLKVHSKYKPYKCKTCKRCFSSEETLVQHTRTHSGEKPYKCHICNKKFAISSSLKIHIRTHTGEKPLQCKICGKRFNESSNLSKHIKTHQKKYKCSDCSKSFDDLGKLNSQKVKCALERKPYL.

Disordered regions lie at residues 1–26 (MDAL…AASA) and 140–164 (NNFH…PRRK). Residues 17-26 (ATSAATAASA) are compositionally biased toward low complexity. The segment covering 147–158 (SDPTSPQQNSKS) has biased composition (polar residues). A phosphoserine mark is found at S156 and S166. Residues 182–502 (KPNPPPGSDD…LTNNDLNDLI (321 aa)) form a zinc-responsive domain 1 (ZRD(AD1)) region. The transcription activation domain 1 (AD1) stretch occupies residues 207–402 (HPKSEANIKQ…YEVPFGKHIN (196 aa)). 2 disordered regions span residues 436 to 482 (NRCN…VNNS) and 510 to 555 (RFRN…PSSI). Over residues 442 to 456 (NNLNGSNNNTAGATS) the composition is skewed to low complexity. Basic residues predominate over residues 460–474 (QHHHHRIQFHSHKPN). S515 carries the post-translational modification Phosphoserine. The segment covering 545 to 555 (SSLEDSLPSSI) has biased composition (low complexity). A C2H2-type 1 zinc finger spans residues 579–604 (LKCKWKECPESCSSLFDLQRHLLKDH). The interval 579–641 (LKCKWKECPE…SIVNHINCQH (63 aa)) is zinc-responsive domain 2 (ZRD(AD2)). Residues C581, C586, H599, H604, C618, C623, H636, and H641 each coordinate Zn(2+). Residues 611-640 (HPMEPLACNWEDCDFLGDDTCSIVNHINCQ) are transcription activation domain 2 (AD2). The segment at 616-641 (LACNWEDCDFLGDDTCSIVNHINCQH) adopts a C2H2-type 2; atypical zinc-finger fold. 5 consecutive C2H2-type zinc fingers follow at residues 705–730 (VICQ…EAVH), 738–762 (YQCL…LKVH), 768–790 (YKCK…TRTH), 796–818 (YKCH…IRTH), and 824–846 (LQCK…IKTH). Residues 705–846 (VICQWDGCNK…SNLSKHIKTH (142 aa)) constitute a DNA-binding region (DNA-binding domain).

It is found in the nucleus. Its activity is regulated as follows. Active in zinc-limited cells and repressed in replete cells. Zinc controls ZAP1 DNA binding activity. Transcription regulator controlling zinc-responsive gene expression. Binds to zinc-responsive elements (ZREs) (consensus sequence 5'-ACCYYNAAGGT-3') in the promoter of target genes. Recruits SWI/SNF, SAGA, and Mediator complexes as coactivators in a zinc-responsive manner. Involved in zinc ion homeostasis by zinc-responsive transcriptional regulation of the zinc uptake system genes ZTR1 and ZTR2. Positively regulates ETR1 expression, affecting mitochondrial function. This chain is Zinc-responsive transcriptional regulator ZAP1 (ZAP1), found in Saccharomyces cerevisiae (strain ATCC 204508 / S288c) (Baker's yeast).